A 727-amino-acid chain; its full sequence is Glycerol-3-phosphate dehydrogenase, mitochondrial (727 aa).

A mitochondrion-targeting transit peptide spans 1 to 42 (MAFQKAVKGTILVGGGALATVLGLSQFAHYRRKQMNLAYVKA). Residue 71 to 99 (DILVIGGGATGSGCALDAVTRGLKTALVE) participates in FAD binding. Y601 is modified (phosphotyrosine). EF-hand domains are found at residues 623-658 (SDID…INVQ) and 659-694 (MDEN…IQKG). Residues D672, N674, N676, Q678, and E683 each contribute to the Ca(2+) site.

The protein belongs to the FAD-dependent glycerol-3-phosphate dehydrogenase family. FAD is required as a cofactor.

It localises to the mitochondrion. It catalyses the reaction a quinone + sn-glycerol 3-phosphate = dihydroxyacetone phosphate + a quinol. The protein operates within polyol metabolism; glycerol degradation via glycerol kinase pathway; glycerone phosphate from sn-glycerol 3-phosphate (anaerobic route): step 1/1. With respect to regulation, calcium-binding enhance the activity of the enzyme. Functionally, calcium-responsive mitochondrial glycerol-3-phosphate dehydrogenase which seems to be a key component of the pancreatic beta-cell glucose-sensing device. This is Glycerol-3-phosphate dehydrogenase, mitochondrial from Homo sapiens (Human).